The primary structure comprises 120 residues: Large ribosomal subunit protein bL19 (120 aa).

The protein belongs to the bacterial ribosomal protein bL19 family.

This protein is located at the 30S-50S ribosomal subunit interface and may play a role in the structure and function of the aminoacyl-tRNA binding site. This Geobacillus kaustophilus (strain HTA426) protein is Large ribosomal subunit protein bL19.